The chain runs to 882 residues: Piwi-like protein 3 (882 aa).

The span at 1–15 (MPGRARTRARGRARR) shows a compositional bias: basic residues. The interval 1-91 (MPGRARTRAR…EAGLHTAPLQ (91 aa)) is disordered. A compositionally biased stretch (polar residues) spans 32 to 46 (SATTQEPPQLQSTPR). Positions 293–406 (TAYDFIKRTS…LIPQLCHMTG (114 aa)) constitute a PAZ domain. Positions 578-868 (KVICILPNDD…LAYLVGQSIH (291 aa)) constitute a Piwi domain.

This sequence belongs to the argonaute family. Piwi subfamily. Expressed in testis.

It localises to the cytoplasm. Functionally, may play a role during spermatogenesis by repressing transposable elements and preventing their mobilization, which is essential for the germline integrity. Acts via the piRNA metabolic process, which mediates the repression of transposable elements during meiosis by forming complexes composed of piRNAs and Piwi proteins and govern the methylation and subsequent repression of transposons. Directly binds piRNAs, a class of 24 to 30 nucleotide RNAs that are generated by a Dicer-independent mechanism and are primarily derived from transposons and other repeated sequence elements. Besides their function in transposable elements repression, piRNAs are probably involved in other processes during meiosis such as translation regulation. This is Piwi-like protein 3 (PIWIL3) from Homo sapiens (Human).